A 565-amino-acid chain; its full sequence is Mitochondrial distribution and morphology protein 34 (565 aa).

The region spanning M1 to L195 is the SMP-LTD domain. 3 disordered regions span residues E207–L236, P296–T317, and S348–P504. A compositionally biased stretch (basic residues) spans R358–R370. The segment covering V371–E381 has biased composition (basic and acidic residues). Residues S382–S401 are compositionally biased toward polar residues. Composition is skewed to basic and acidic residues over residues L446 to V472 and I483 to E496.

The protein belongs to the MDM34 family. Component of the ER-mitochondria encounter structure (ERMES) or MDM complex, composed of mmm1, mdm10, mdm12 and mdm34.

The protein localises to the mitochondrion outer membrane. Functionally, component of the ERMES/MDM complex, which serves as a molecular tether to connect the endoplasmic reticulum (ER) and mitochondria. Components of this complex are involved in the control of mitochondrial shape and protein biogenesis, and function in nonvesicular lipid trafficking between the ER and mitochondria. Mdm34 is required for the interaction of the ER-resident membrane protein mmm1 and the outer mitochondrial membrane-resident beta-barrel protein mdm10. The chain is Mitochondrial distribution and morphology protein 34 from Aspergillus terreus (strain NIH 2624 / FGSC A1156).